The primary structure comprises 199 residues: Golgi to ER traffic protein 1 (199 aa).

At 1-11 the chain is on the lumenal side; that stretch reads MLLPDLHPYTI. The helical transmembrane segment at 12 to 31 threads the bilayer; the sequence is LLSIFLVLVAKQLVATIGKS. Over 32–115 the chain is Cytoplasmic; that stretch reads TIQEFVWLVY…SIDKASNALI (84 aa). Positions 76-116 form a coiled coil; that stretch reads YAKWTKLNRQADKLSAELQKLNQEIQQQKSSIDKASNALIL. Residues 116–136 form a helical membrane-spanning segment; sequence LVLTTLPIWIARVFYRKTHLF. Topologically, residues 137 to 160 are lumenal; sequence YIRQGIFPKYVEWVLALPFLPNGA. The chain crosses the membrane as a helical span at residues 161–177; sequence VGLTIWMFAVNSVVSNF. Topologically, residues 178–199 are cytoplasmic; it reads SFLVSFPFAKRVSKPVRDTKVE.

Belongs to the WRB/GET1 family. In terms of assembly, component of the Golgi to ER traffic (GET) complex, which is composed of GET1, GET2 and GET3. Within the complex, GET1 and GET2 form a heterotetramer which is stabilized by phosphatidylinositol binding and which binds to the GET3 homodimer.

It is found in the endoplasmic reticulum membrane. It localises to the golgi apparatus membrane. Functionally, required for the post-translational delivery of tail-anchored (TA) proteins to the endoplasmic reticulum. Together with GET2, acts as a membrane receptor for soluble GET3, which recognizes and selectively binds the transmembrane domain of TA proteins in the cytosol. The GET complex cooperates with the HDEL receptor ERD2 to mediate the ATP-dependent retrieval of resident ER proteins that contain a C-terminal H-D-E-L retention signal from the Golgi to the ER. This Candida albicans (strain SC5314 / ATCC MYA-2876) (Yeast) protein is Golgi to ER traffic protein 1.